A 337-amino-acid polypeptide reads, in one-letter code: Anthranilate phosphoribosyltransferase (337 aa).

Residues Gly-82, 85–86 (GD), Thr-90, 92–95 (NIST), 110–118 (KHGGRSVSS), and Ser-122 each bind 5-phospho-alpha-D-ribose 1-diphosphate. Anthranilate is bound at residue Gly-82. A Mg(2+)-binding site is contributed by Ser-94. Arg-168 is a binding site for anthranilate. Mg(2+) contacts are provided by Asp-226 and Glu-227.

Belongs to the anthranilate phosphoribosyltransferase family. In terms of assembly, homodimer. It depends on Mg(2+) as a cofactor.

The catalysed reaction is N-(5-phospho-beta-D-ribosyl)anthranilate + diphosphate = 5-phospho-alpha-D-ribose 1-diphosphate + anthranilate. It participates in amino-acid biosynthesis; L-tryptophan biosynthesis; L-tryptophan from chorismate: step 2/5. Catalyzes the transfer of the phosphoribosyl group of 5-phosphorylribose-1-pyrophosphate (PRPP) to anthranilate to yield N-(5'-phosphoribosyl)-anthranilate (PRA). The protein is Anthranilate phosphoribosyltransferase of Francisella tularensis subsp. novicida (strain U112).